Consider the following 452-residue polypeptide: cAMP-dependent protein kinase regulatory subunit (452 aa).

A dimerization and phosphorylation region spans residues 28 to 212 (QFCANYFNSK…ELSKTLGSNF (185 aa)). Positions 74–163 (IMTTNKRQPS…APPVPKSKIP (90 aa)) are disordered. A compositionally biased stretch (polar residues) spans 75-84 (MTTNKRQPSF). A compositionally biased stretch (basic and acidic residues) spans 95 to 106 (SIDHHHDDDPKE). Phosphoserine is present on S173. A nucleoside 3',5'-cyclic phosphate is bound by residues 213–330 (LFRQ…FLKD) and 333–451 (VLSS…QGSS). 4 residues coordinate 3',5'-cyclic AMP: E278, R287, E399, and R408.

It belongs to the cAMP-dependent kinase regulatory chain family. In terms of assembly, tetramer, composed of 2 regulatory (R) and 2 catalytic (C) subunits. In the presence of cAMP it dissociates into 2 active monomeric C subunits and an R dimer.

This is cAMP-dependent protein kinase regulatory subunit (PKAR) from Debaryomyces hansenii (strain ATCC 36239 / CBS 767 / BCRC 21394 / JCM 1990 / NBRC 0083 / IGC 2968) (Yeast).